The primary structure comprises 248 residues: 4-hydroxy-tetrahydrodipicolinate reductase (248 aa).

NAD(+) is bound by residues glycine 9 to valine 14, glycine 77 to threonine 79, and alanine 104 to phenylalanine 107. Histidine 134 (proton donor/acceptor) is an active-site residue. Histidine 135 serves as a coordination point for (S)-2,3,4,5-tetrahydrodipicolinate. Catalysis depends on lysine 138, which acts as the Proton donor. Glycine 144–threonine 145 is a binding site for (S)-2,3,4,5-tetrahydrodipicolinate.

The protein belongs to the DapB family.

It localises to the cytoplasm. It carries out the reaction (S)-2,3,4,5-tetrahydrodipicolinate + NAD(+) + H2O = (2S,4S)-4-hydroxy-2,3,4,5-tetrahydrodipicolinate + NADH + H(+). The catalysed reaction is (S)-2,3,4,5-tetrahydrodipicolinate + NADP(+) + H2O = (2S,4S)-4-hydroxy-2,3,4,5-tetrahydrodipicolinate + NADPH + H(+). The protein operates within amino-acid biosynthesis; L-lysine biosynthesis via DAP pathway; (S)-tetrahydrodipicolinate from L-aspartate: step 4/4. In terms of biological role, catalyzes the conversion of 4-hydroxy-tetrahydrodipicolinate (HTPA) to tetrahydrodipicolinate. This is 4-hydroxy-tetrahydrodipicolinate reductase from Corynebacterium aurimucosum (strain ATCC 700975 / DSM 44827 / CIP 107346 / CN-1) (Corynebacterium nigricans).